The sequence spans 309 residues: Methionyl-tRNA formyltransferase (309 aa).

S110–P113 provides a ligand contact to (6S)-5,6,7,8-tetrahydrofolate. The tract at residues K289–K309 is disordered. Over residues R298–K309 the composition is skewed to basic and acidic residues.

The protein belongs to the Fmt family.

The enzyme catalyses L-methionyl-tRNA(fMet) + (6R)-10-formyltetrahydrofolate = N-formyl-L-methionyl-tRNA(fMet) + (6S)-5,6,7,8-tetrahydrofolate + H(+). Its function is as follows. Attaches a formyl group to the free amino group of methionyl-tRNA(fMet). The formyl group appears to play a dual role in the initiator identity of N-formylmethionyl-tRNA by promoting its recognition by IF2 and preventing the misappropriation of this tRNA by the elongation apparatus. In Saccharopolyspora erythraea (strain ATCC 11635 / DSM 40517 / JCM 4748 / NBRC 13426 / NCIMB 8594 / NRRL 2338), this protein is Methionyl-tRNA formyltransferase.